The sequence spans 524 residues: Ribonuclease Y (524 aa).

Residues I3–F23 form a helical membrane-spanning segment. Positions A214–L274 constitute a KH domain. The HD domain occupies L340 to A432.

Belongs to the RNase Y family.

It is found in the cell membrane. In terms of biological role, endoribonuclease that initiates mRNA decay. The sequence is that of Ribonuclease Y from Chlorobium luteolum (strain DSM 273 / BCRC 81028 / 2530) (Pelodictyon luteolum).